The following is a 472-amino-acid chain: UDP-N-acetylmuramate--L-alanine ligase (472 aa).

119 to 125 is a binding site for ATP; the sequence is GTHGKTT.

This sequence belongs to the MurCDEF family.

Its subcellular location is the cytoplasm. It carries out the reaction UDP-N-acetyl-alpha-D-muramate + L-alanine + ATP = UDP-N-acetyl-alpha-D-muramoyl-L-alanine + ADP + phosphate + H(+). It participates in cell wall biogenesis; peptidoglycan biosynthesis. Functionally, cell wall formation. This chain is UDP-N-acetylmuramate--L-alanine ligase, found in Caulobacter sp. (strain K31).